The primary structure comprises 153 residues: Allergen Pet c 1 (153 aa).

This sequence belongs to the BetVI family. May form dimers.

This chain is Allergen Pet c 1, found in Petroselinum crispum (Parsley).